We begin with the raw amino-acid sequence, 154 residues long: Myoglobin (154 aa).

The 147-residue stretch at 2 to 148 (GLSDDEWHHV…FRNDMASKYK (147 aa)) folds into the Globin domain. His-65 provides a ligand contact to nitrite. His-65 lines the O2 pocket. His-94 serves as a coordination point for heme b.

It belongs to the globin family. Monomeric.

Its subcellular location is the cytoplasm. The protein resides in the sarcoplasm. It catalyses the reaction Fe(III)-heme b-[protein] + nitric oxide + H2O = Fe(II)-heme b-[protein] + nitrite + 2 H(+). It carries out the reaction H2O2 + AH2 = A + 2 H2O. Functionally, monomeric heme protein which primary function is to store oxygen and facilitate its diffusion within muscle tissues. Reversibly binds oxygen through a pentacoordinated heme iron and enables its timely and efficient release as needed during periods of heightened demand. Depending on the oxidative conditions of tissues and cells, and in addition to its ability to bind oxygen, it also has a nitrite reductase activity whereby it regulates the production of bioactive nitric oxide. Under stress conditions, like hypoxia and anoxia, it also protects cells against reactive oxygen species thanks to its pseudoperoxidase activity. The protein is Myoglobin (MB) of Graptemys geographica (Common map turtle).